We begin with the raw amino-acid sequence, 571 residues long: Calcium-dependent protein kinase 16 (571 aa).

The segment at 1–74 (MGLCFSSAAK…TRHTPPHGKV (74 aa)) is disordered. Residue Gly-2 is the site of N-myristoyl glycine attachment. Cys-4 is lipidated: S-palmitoyl cysteine. Residues 63-72 (TPTRHTPPHG) are compositionally biased toward basic residues. Residues 108–368 (YTIGKLLGHG…AAQALSHPWV (261 aa)) enclose the Protein kinase domain. ATP is bound by residues 114-122 (LGHGQFGYT) and Lys-137. Asp-234 functions as the Proton acceptor in the catalytic mechanism. At Ser-274 the chain carries Phosphoserine. The autoinhibitory domain stretch occupies residues 374 to 404 (ASEIPIDISVLNNMRQFVKFSRLKQFALRAL). EF-hand domains lie at 411–446 (EELA…DHPW), 448–483 (LKDA…VNQL), 490–525 (KWQQ…KGSI), and 528–555 (LLEE…ASIK). Positions 424, 426, 428, 435, 461, 463, 465, 472, 503, 505, 507, 514, 533, 535, 537, and 539 each coordinate Ca(2+). Ser-541 is modified (phosphoserine). Glu-544 contributes to the Ca(2+) binding site.

The protein belongs to the protein kinase superfamily. Ser/Thr protein kinase family. CDPK subfamily.

It is found in the cell membrane. It localises to the nucleus. The catalysed reaction is L-seryl-[protein] + ATP = O-phospho-L-seryl-[protein] + ADP + H(+). It carries out the reaction L-threonyl-[protein] + ATP = O-phospho-L-threonyl-[protein] + ADP + H(+). Activated by calcium. Autophosphorylation may play an important role in the regulation of the kinase activity. May play a role in signal transduction pathways that involve calcium as a second messenger. The chain is Calcium-dependent protein kinase 16 (CPK16) from Arabidopsis thaliana (Mouse-ear cress).